We begin with the raw amino-acid sequence, 100 residues long: MAEIAVEVVYALPERQALLRLSVPAGTSAREAVRLSGIAEVFPELDIHCCPLGIFGKALANPEERPLEAGERVEIYRPLIADPKEVRKQRAARARAERGD.

Belongs to the UPF0125 (RnfH) family.

This Pseudomonas paraeruginosa (strain DSM 24068 / PA7) (Pseudomonas aeruginosa (strain PA7)) protein is Protein RnfH.